The primary structure comprises 257 residues: Snake venom serine protease KN11 (257 aa).

Positions 1-18 (MVLIRVLANLLILQLSYA) are cleaved as a signal peptide. A propeptide spanning residues 19–24 (QKSSEL) is cleaved from the precursor. In terms of domain architecture, Peptidase S1 spans 25-248 (VTGGHPCNIN…HLDWIKSIIA (224 aa)). Disulfide bonds link cysteine 31–cysteine 162, cysteine 49–cysteine 65, cysteine 97–cysteine 255, cysteine 141–cysteine 209, cysteine 173–cysteine 188, and cysteine 199–cysteine 224. Residues histidine 64 and aspartate 109 each act as charge relay system in the active site. Asparagine 120 and asparagine 121 each carry an N-linked (GlcNAc...) asparagine glycan. Serine 203 functions as the Charge relay system in the catalytic mechanism.

It belongs to the peptidase S1 family. Snake venom subfamily. Monomer. As to expression, expressed by the venom gland.

It is found in the secreted. Snake venom serine protease that may act in the hemostasis system of the prey. This Trimeresurus stejnegeri (Chinese green tree viper) protein is Snake venom serine protease KN11.